The sequence spans 294 residues: PAK4-inhibitor INKA2 (294 aa).

3 disordered regions span residues 50–143 (ISGG…STLM), 170–198 (PELE…RELG), and 223–290 (LKEK…DINT). Residues 85–99 (SPSNQASLGSTSSGK) are compositionally biased toward polar residues. Positions 134 to 177 (EPDDWTSTLMSRGRNRQPLVLGDNVFADLVGNWLDLPELEKGGE) are inka box. Positions 171 to 198 (ELEKGGEKGETGEAGEPKGGRGQPRELG) are enriched in basic and acidic residues. Residues 241-253 (RSQKVKKRSHSKG) show a composition bias toward basic residues.

The protein belongs to the INKA family. As to quaternary structure, interacts with PAK4.

The protein localises to the nucleus. Its function is as follows. Inhibitor of the serine/threonine-protein kinase PAK4. Acts by binding PAK4 in a substrate-like manner, inhibiting the protein kinase activity. In Bos taurus (Bovine), this protein is PAK4-inhibitor INKA2.